Here is a 90-residue protein sequence, read N- to C-terminus: MSVKIRMHRAGAKRKPFYRIVVADSRMPRDGRFIEQVGYYNPVSQPKELKLDEDKIFDWLQKGAQPSDTVRSLLSGAGLMTKLHDAKYNK.

This sequence belongs to the bacterial ribosomal protein bS16 family.

This is Small ribosomal subunit protein bS16 from Lactobacillus helveticus (strain DPC 4571).